A 368-amino-acid polypeptide reads, in one-letter code: Alanine racemase (368 aa).

The active-site Proton acceptor; specific for D-alanine is the K34. Position 34 is an N6-(pyridoxal phosphate)lysine (K34). R132 contacts substrate. Y261 functions as the Proton acceptor; specific for L-alanine in the catalytic mechanism. M309 provides a ligand contact to substrate.

The protein belongs to the alanine racemase family. The cofactor is pyridoxal 5'-phosphate.

The catalysed reaction is L-alanine = D-alanine. It functions in the pathway amino-acid biosynthesis; D-alanine biosynthesis; D-alanine from L-alanine: step 1/1. In terms of biological role, catalyzes the interconversion of L-alanine and D-alanine. May also act on other amino acids. This is Alanine racemase (alr) from Carboxydothermus hydrogenoformans (strain ATCC BAA-161 / DSM 6008 / Z-2901).